Here is a 613-residue protein sequence, read N- to C-terminus: Portal protein (613 aa).

Residues 577-613 form a disordered region; that stretch reads ATGGDHGIRQAPSARGDAEPDHAKSKPARDPPPGAGS. The segment covering 592–605 has biased composition (basic and acidic residues); the sequence is GDAEPDHAKSKPAR.

This sequence belongs to the herpesviridae portal protein family. In terms of assembly, homododecamerizes. Interacts with terminase subunits TRM1 and TRM3.

The protein resides in the virion. It localises to the host nucleus. Functionally, forms a portal in the viral capsid through which viral DNA is translocated during DNA packaging. Assembles as a dodecamer at a single fivefold axe of the T=16 icosahedric capsid. Binds to the molecular motor that translocates the viral DNA, termed terminase. The chain is Portal protein from Homo sapiens (Human).